A 404-amino-acid polypeptide reads, in one-letter code: Cysteine desulfurase IscS (404 aa).

Pyridoxal 5'-phosphate is bound by residues 75 to 76 (AT), N155, Q183, and 203 to 205 (SSH). K206 carries the post-translational modification N6-(pyridoxal phosphate)lysine. A pyridoxal 5'-phosphate-binding site is contributed by T243. Catalysis depends on C328, which acts as the Cysteine persulfide intermediate. C328 contributes to the [2Fe-2S] cluster binding site.

The protein belongs to the class-V pyridoxal-phosphate-dependent aminotransferase family. NifS/IscS subfamily. In terms of assembly, homodimer. Forms a heterotetramer with IscU, interacts with other sulfur acceptors. Pyridoxal 5'-phosphate is required as a cofactor.

Its subcellular location is the cytoplasm. The catalysed reaction is (sulfur carrier)-H + L-cysteine = (sulfur carrier)-SH + L-alanine. It functions in the pathway cofactor biosynthesis; iron-sulfur cluster biosynthesis. In terms of biological role, master enzyme that delivers sulfur to a number of partners involved in Fe-S cluster assembly, tRNA modification or cofactor biosynthesis. Catalyzes the removal of elemental sulfur atoms from cysteine to produce alanine. Functions as a sulfur delivery protein for Fe-S cluster synthesis onto IscU, an Fe-S scaffold assembly protein, as well as other S acceptor proteins. The chain is Cysteine desulfurase IscS from Pasteurella multocida (strain Pm70).